We begin with the raw amino-acid sequence, 419 residues long: LanC-like protein 3 homolog (419 aa).

Belongs to the LanC-like protein family.

The polypeptide is LanC-like protein 3 homolog (Drosophila melanogaster (Fruit fly)).